The primary structure comprises 469 residues: Mitochondrial adenyl nucleotide antiporter SLC25A25 (469 aa).

The interval 1–165 is regulatory N-terminal domain; sequence MLCLCLYVPV…LYWKHSTIFD (165 aa). Residues 1 to 189 lie on the Mitochondrial intermembrane side of the membrane; it reads MLCLCLYVPV…ERQTGMWWRH (189 aa). 3 consecutive EF-hand domains span residues 47–80, 78–113, and 114–149; these read TYRQ…QDHE, DHEK…LGVK, and ISEQ…HPVE. Ca(2+) contacts are provided by aspartate 60, aspartate 62, aspartate 64, glutamine 66, and glutamate 71. The tract at residues 151 to 160 is linker region; sequence IPEIILYWKH. The interval 166–469 is C-terminal transmembrane transporter domain; it reads VGENLTVPDE…LKITLGVQSR (304 aa). Solcar repeat units lie at residues 184–270, 278–363, and 375–463; these read GMWW…IKRL, LRIH…LKNA, and PGVF…LKIT. The helical transmembrane segment at 190–207 threads the bilayer; the sequence is LVAGGGAGAVSRTCTAPL. The Mitochondrial matrix portion of the chain corresponds to 208 to 244; sequence DRLKVLMQVHASRSNNMGIVGGFTQMIREGGARSLWR. Residues 245–264 form a helical membrane-spanning segment; it reads GNGINVLKIAPESAIKFMAY. Residues 265–287 are Mitochondrial intermembrane-facing; that stretch reads EQIKRLVGSDQETLRIHERLVAG. A helical membrane pass occupies residues 288-301; it reads SLAGAIAQSSIYPM. Over 302 to 337 the chain is Mitochondrial matrix; that stretch reads EVLKTRMALRKTGQYSGMLDCARRILAREGVAAFYK. A helical transmembrane segment spans residues 338–357; the sequence is GYVPNMLGIIPYAGIDLAVY. Residues 358-380 lie on the Mitochondrial intermembrane side of the membrane; sequence ETLKNAWLQHYAVNSADPGVFVL. Residues 381–398 form a helical membrane-spanning segment; that stretch reads LACGTMSSTCGQLASYPL. The Mitochondrial matrix segment spans residues 399–437; that stretch reads ALVRTRMQAQASIEGAPEVTMSSLFKHILRTEGAFGLYR. The chain crosses the membrane as a helical span at residues 438–457; the sequence is GLAPNFMKVIPAVSISYVVY. Residues 458-469 lie on the Mitochondrial intermembrane side of the membrane; it reads ENLKITLGVQSR.

This sequence belongs to the mitochondrial carrier (TC 2.A.29) family. Widely expressed. Expressed in fetal and adult liver, skeletal muscle, testis, ovary, hippocampus and caudate nucleus. In terms of tissue distribution, expressed in all tissues tested. As to expression, expression is restricted to kidney and lung.

The protein localises to the mitochondrion inner membrane. The catalysed reaction is Mg(2+)(out) + phosphate(in) + ATP(out) = Mg(2+)(in) + phosphate(out) + ATP(in). Its activity is regulated as follows. Activated by an increase in cytosolic calcium levels that induce a conformational change of the N-terminal regulatory domain, uncapping the channel and allowing transport. Functionally, electroneutral antiporter that most probably mediates the transport of adenyl nucleotides through the inner mitochondrial membrane. Originally identified as an ATP-magnesium/inorganic phosphate antiporter, it could have a broader specificity for adenyl nucleotides. By regulating the mitochondrial matrix adenyl nucleotide pool could adapt to changing cellular energetic demands and indirectly regulate adenyl nucleotide-dependent metabolic pathways. This chain is Mitochondrial adenyl nucleotide antiporter SLC25A25, found in Homo sapiens (Human).